Here is a 652-residue protein sequence, read N- to C-terminus: MERSRSKRNYHYDQDYDGDSMPRSKPRYNNNYHFGGGGGGNNRYRGGGGGGGGNGRPSKSHPETMATTTYRILCHDAKAGGVIGKSGTIIKSIRQHTGAWINVHELVPGDAERIIEISDNRRRDPDGRMPSFSPAQEALFSVHDRILESEAQFGYGGPPPEEEEDYGGVRPGGGRVVTRLVVSRMHVGCLLGKGGKIIEQMRIETKTHIRILPRESNLPRCVSLSEEIVQIVGELNAVKNALAIVSSRLRESQHRDRSNFQGRSHSPERSFAAAGDDYMPQLRRQSSDRFPRGNFRNNNFSSRQSNYAEEAPAVPVGENVYSEELVFQILCPADKIVRVVGESQGIIDLLQNEIGVDVRVSDPVAGSDEQIITISSEEAPDDPFFPAQEALLHIQTQIIDLIPDKDNLITTRLLVPSRDSICLEGKAGSVSEISRLTGTSVQILAREEIPRCASINDVVIQITGEIRAAREALVELTLLLRSHMFKELSQKETPPASTSTTGPLEGVAGVMEVASSNNTIQSREGPTSSNLNLQQVSTILPQFKEGFGSVAKAGESEHREEVPVTTSRMAVPLVTRSTLEVVLPEAVVPKLVTKSRNKLAQISEWSGASVTIVEDRPEETQNIIRISGTPEQAERAQSLLQGFILSIQEDGP.

Over residues 1 to 14 (MERSRSKRNYHYDQ) the composition is skewed to basic and acidic residues. Positions 1-63 (MERSRSKRNY…NGRPSKSHPE (63 aa)) are disordered. A compositionally biased stretch (gly residues) spans 34–55 (FGGGGGGNNRYRGGGGGGGGNG). KH domains follow at residues 67-139 (TTTY…QEAL) and 175-245 (RVVT…LAIV). Residues 253–307 (QHRDRSNFQGRSHSPERSFAAAGDDYMPQLRRQSSDRFPRGNFRNNNFSSRQSNY) form a disordered region. Over residues 292–306 (RGNFRNNNFSSRQSN) the composition is skewed to low complexity. KH domains lie at 324–391 (ELVF…QEAL), 408–476 (LITT…LVEL), and 576–640 (RSTL…QSLL).

As to quaternary structure, homodimer. Interacts with CPL1. Interacts with RS40 and RS41. Interacts with DRB1/HYL1 and SE. Interacts with CPL2. In terms of tissue distribution, expressed in roots, cotyledons, leaves, flowers and siliques.

It localises to the nucleus. It is found in the nucleus speckle. Functionally, acts as a negative regulator of osmotic stress-induced gene expression. Involved in the regulation of thermotolerance responses under heat stress. Functions as an upstream regulator of heat stress transcription factor (HSF) genes. Negatively regulates HSFA1A, HSFA1B and HSFA1D, but positively controls the expression of HSFA1E, HSFA3, HSFA9, HSFB3, and DREB2C. Forms a complex with CPL1 that modulates co-transcriptional processes such as mRNA capping and polyadenylation, and functions to repress stress-inducible gene expression. Regulates pre-mRNA processing under salt stress. Involved in primary miRNA processing and pri-miRNA biogenesis. Binds both intronless and intron-containing pri-miRNAs. Acts as a regulator of biotic stress response gene expression and basal JA-mediated responses involved in defense. Acts as a negative regulator of resistance to the fungal pathogen Fusarium oxysporum. This Arabidopsis thaliana (Mouse-ear cress) protein is RNA-binding KH domain-containing protein RCF3.